The following is a 1298-amino-acid chain: Phosphoribosylformylglycinamidine synthase (1298 aa).

Residues 303-327 are disordered; that stretch reads FPGAATGSGGEIRDEGATGRGAKPK. ATP contacts are provided by residues 305–316, 384–386, and Ala-676; these read GAATGSGGEIRD and TGY. Residues Asp-677, Glu-716, Asn-720, and Asp-884 each coordinate Mg(2+). Position 886 (Ser-886) interacts with ATP. The 254-residue stretch at 1045-1298 folds into the Glutamine amidotransferase type-1 domain; the sequence is VAVLREQGVN…MFRNARAWVN (254 aa). Residue Cys-1138 is the Nucleophile of the active site. Residues His-1263 and Glu-1265 contribute to the active site.

The protein in the N-terminal section; belongs to the FGAMS family. In terms of assembly, monomer.

It is found in the cytoplasm. The catalysed reaction is N(2)-formyl-N(1)-(5-phospho-beta-D-ribosyl)glycinamide + L-glutamine + ATP + H2O = 2-formamido-N(1)-(5-O-phospho-beta-D-ribosyl)acetamidine + L-glutamate + ADP + phosphate + H(+). Its pathway is purine metabolism; IMP biosynthesis via de novo pathway; 5-amino-1-(5-phospho-D-ribosyl)imidazole from N(2)-formyl-N(1)-(5-phospho-D-ribosyl)glycinamide: step 1/2. In terms of biological role, phosphoribosylformylglycinamidine synthase involved in the purines biosynthetic pathway. Catalyzes the ATP-dependent conversion of formylglycinamide ribonucleotide (FGAR) and glutamine to yield formylglycinamidine ribonucleotide (FGAM) and glutamate. The chain is Phosphoribosylformylglycinamidine synthase from Pseudomonas syringae pv. tomato (strain ATCC BAA-871 / DC3000).